The primary structure comprises 87 residues: U3-theraphotoxin-Hhn1a 12 (87 aa).

The first 24 residues, M1–A24, serve as a signal peptide directing secretion. A propeptide spanning residues S25 to R52 is cleaved from the precursor. Intrachain disulfides connect C54–C67, C61–C72, and C66–C79.

The protein belongs to the neurotoxin 10 (Hwtx-1) family. 51 (Hntx-8) subfamily. Hntx-8 sub-subfamily. As to expression, expressed by the venom gland.

It is found in the secreted. Its function is as follows. Ion channel inhibitor. The polypeptide is U3-theraphotoxin-Hhn1a 12 (Cyriopagopus hainanus (Chinese bird spider)).